A 333-amino-acid polypeptide reads, in one-letter code: 4-hydroxyproline epimerase (333 aa).

Cys90 (proton acceptor) is an active-site residue. Substrate contacts are provided by residues 91–92 and Asp249; that span reads GH. Residue Cys253 is the Proton donor of the active site. 254–255 provides a ligand contact to substrate; the sequence is GT.

This sequence belongs to the proline racemase family. Homodimer.

The enzyme catalyses trans-4-hydroxy-L-proline = cis-4-hydroxy-D-proline. Functionally, allows intracellular utilization of 4-hydroxyproline, one of the major constituents of host collagen, by converting 4-hydroxy-L-proline to 4-hydroxy-D-proline, which can be further metabolized by intracellular 4-hydroxy-D-proline oxidases. Strong B-cell mitogen. Plays an important role in the regulation of intra- and extracellular amino acid pools, allowing the bacterium to profit from host precursors and enzymatic pathways. The sequence is that of 4-hydroxyproline epimerase from Brucella canis (strain ATCC 23365 / NCTC 10854 / RM-666).